Here is a 397-residue protein sequence, read N- to C-terminus: uncharacterized protein (397 aa).

The next 4 membrane-spanning stretches (helical) occupy residues 255–275 (LLTY…ICYA), 284–304 (MITF…VLLA), 308–328 (LITA…PLPL), and 370–390 (VLLV…YCLG).

It is found in the cell membrane. This is an uncharacterized protein from Methanocaldococcus jannaschii (strain ATCC 43067 / DSM 2661 / JAL-1 / JCM 10045 / NBRC 100440) (Methanococcus jannaschii).